Consider the following 709-residue polypeptide: Polyribonucleotide nucleotidyltransferase (709 aa).

Mg(2+) contacts are provided by Asp490 and Asp496. Residues 557–616 (PKVITMRVLPEKIPVIIGPSGKNIKKIIDETGVKIDLDQEGLVRIYAVDGESADKAKEMI) form the KH domain. In terms of domain architecture, S1 motif spans 626 to 694 (GEVYMGKVTR…EMGRAKVSLK (69 aa)).

The protein belongs to the polyribonucleotide nucleotidyltransferase family. The cofactor is Mg(2+).

The protein localises to the cytoplasm. It catalyses the reaction RNA(n+1) + phosphate = RNA(n) + a ribonucleoside 5'-diphosphate. Involved in mRNA degradation. Catalyzes the phosphorolysis of single-stranded polyribonucleotides processively in the 3'- to 5'-direction. This is Polyribonucleotide nucleotidyltransferase from Persephonella marina (strain DSM 14350 / EX-H1).